A 218-amino-acid polypeptide reads, in one-letter code: Dehydration-responsive element-binding protein 1B (218 aa).

The segment at 1–26 is disordered; it reads MEVEEAAYRTVWSEPPKRPAGRTKFR. A DNA-binding region (AP2/ERF) is located at residues 32 to 95; sequence VYRGVRRRGG…RGRAACLNFA (64 aa). A disordered region spans residues 131–151; that stretch reads SAAPSSPAETFADDGDEEEDN. The segment covering 141 to 151 has biased composition (acidic residues); sequence FADDGDEEEDN.

Belongs to the AP2/ERF transcription factor family. ERF subfamily.

It is found in the nucleus. Transcriptional activator that binds specifically to the DNA sequence 5'-[AG]CCGAC-3'. Binding to the C-repeat/DRE element mediates high salinity- and dehydration-inducible transcription. Confers resistance to high salt, cold and drought stress. The chain is Dehydration-responsive element-binding protein 1B (DREB1B) from Oryza sativa subsp. indica (Rice).